A 583-amino-acid chain; its full sequence is Long-chain-fatty-acid--AMP ligase FadD26 (583 aa).

Belongs to the ATP-dependent AMP-binding enzyme family.

It catalyses the reaction holo-[(phenol)carboxyphthiodiolenone synthase] + a long-chain fatty acid + ATP = a long-chain fatty acyl-[(phenol)carboxyphthiodiolenone synthase] + AMP + diphosphate. It carries out the reaction eicosanoate + holo-[(phenol)carboxyphthiodiolenone synthase] + ATP = icosanoyl-[(phenol)carboxyphthiodiolenone synthase] + AMP + diphosphate. The catalysed reaction is holo-[(phenol)carboxyphthiodiolenone synthase] + docosanoate + ATP = docosanoyl-[(phenol)carboxyphthiodiolenone synthase] + AMP + diphosphate. Its pathway is lipid metabolism; fatty acid biosynthesis. Its function is as follows. Catalyzes the activation of long-chain fatty acids as acyl-adenylates (acyl-AMP), which are then transferred to the multifunctional polyketide synthase PpsA for further chain extension. Catalyzes the adenylation of the long-chain fatty acids eicosanoate (C20) or docosanoate (C22), and potentially the very-long-chain fatty acid lignocerate (C24). Involved in the biosynthesis of phthiocerol dimycocerosate (DIM A) and phthiodiolone dimycocerosate (DIM B). This chain is Long-chain-fatty-acid--AMP ligase FadD26 (fadD26), found in Mycobacterium bovis (strain ATCC BAA-935 / AF2122/97).